A 426-amino-acid chain; its full sequence is Glutamate-1-semialdehyde 2,1-aminomutase (426 aa).

Lys-265 is modified (N6-(pyridoxal phosphate)lysine).

This sequence belongs to the class-III pyridoxal-phosphate-dependent aminotransferase family. HemL subfamily. In terms of assembly, homodimer. It depends on pyridoxal 5'-phosphate as a cofactor.

The protein localises to the cytoplasm. The enzyme catalyses (S)-4-amino-5-oxopentanoate = 5-aminolevulinate. It participates in porphyrin-containing compound metabolism; protoporphyrin-IX biosynthesis; 5-aminolevulinate from L-glutamyl-tRNA(Glu): step 2/2. The chain is Glutamate-1-semialdehyde 2,1-aminomutase from Escherichia coli (strain K12 / DH10B).